The primary structure comprises 813 residues: Protein SBE22 (813 aa).

Disordered stretches follow at residues 1-66 (MIRP…HGHA), 107-240 (EIFS…GEFG), and 331-359 (QKDS…NRES). Positions 56-66 (RPSDNLFHGHA) are enriched in basic and acidic residues. Over residues 107 to 121 (EIFSTSSSDTQSNIS) the composition is skewed to low complexity. Basic and acidic residues predominate over residues 127 to 138 (SEDHSFGMDKSV). 3 stretches are compositionally biased toward polar residues: residues 139 to 160 (DNSS…NGDS), 169 to 200 (VSVN…NRSM), and 214 to 234 (KNSS…NRSV).

The protein belongs to the SBE2 family.

It is found in the cytoplasm. It localises to the golgi apparatus. In terms of biological role, with SBE2, is involved in cell wall integrity and polarity processes like bud growth. The chain is Protein SBE22 (SBE22) from Candida glabrata (strain ATCC 2001 / BCRC 20586 / JCM 3761 / NBRC 0622 / NRRL Y-65 / CBS 138) (Yeast).